The following is a 681-amino-acid chain: Transferrin (681 aa).

A signal peptide spans 1–18 (MALKLLTLIALTCAAANA). Transferrin-like domains are found at residues 23–364 (YKLC…ERGH) and 371–676 (VRLC…DVIS). 2 cysteine pairs are disulfide-bonded: Cys26/Cys60 and Cys35/Cys51. 2 residues coordinate Fe(3+): Asp75 and Tyr108. 4 disulfide bridges follow: Cys132–Cys228, Cys181–Cys207, Cys204–Cys213, and Cys271–Cys284. Hydrogencarbonate is bound by residues Thr134, Arg138, Val140, and Gly141. Asn218 is a glycosylation site (N-linked (GlcNAc...) asparagine). Fe(3+) is bound at residue Tyr222. N-linked (GlcNAc...) asparagine glycosylation is present at Asn355. Disulfide bonds link Cys374–Cys411 and Cys384–Cys402. A glycan (N-linked (GlcNAc...) asparagine) is linked at Asn418. Intrachain disulfides connect Cys478-Cys551, Cys506-Cys678, and Cys579-Cys596.

Belongs to the transferrin family.

Its subcellular location is the secreted. Transferrins are iron binding transport proteins which bind Fe(3+) ion in association with the binding of an anion, usually bicarbonate. This transferrin binds only one Fe(3+) ion per protein molecule. The chain is Transferrin from Manduca sexta (Tobacco hawkmoth).